The following is a 114-amino-acid chain: Non-specific lipid-transfer protein 1 (114 aa).

An N-terminal signal peptide occupies residues 1–23 (MEMVSKIACFVLLCMVVVAPHAE). Cystine bridges form between Cys27–Cys73, Cys37–Cys50, Cys51–Cys96, and Cys71–Cys110.

The protein belongs to the plant LTP family.

Its function is as follows. Plant non-specific lipid-transfer proteins transfer phospholipids as well as galactolipids across membranes. May play a role in wax or cutin deposition in the cell walls of expanding epidermal cells and certain secretory tissues. The polypeptide is Non-specific lipid-transfer protein 1 (LTP1) (Solanum pennellii (Tomato)).